A 422-amino-acid polypeptide reads, in one-letter code: Glucose-1-phosphate adenylyltransferase (422 aa).

Residues Tyr-108, Gly-173, 188-189, and Ser-206 contribute to the alpha-D-glucose 1-phosphate site; that span reads EK.

It belongs to the bacterial/plant glucose-1-phosphate adenylyltransferase family. Homotetramer.

It catalyses the reaction alpha-D-glucose 1-phosphate + ATP + H(+) = ADP-alpha-D-glucose + diphosphate. It participates in glycan biosynthesis; glycogen biosynthesis. In terms of biological role, involved in the biosynthesis of ADP-glucose, a building block required for the elongation reactions to produce glycogen. Catalyzes the reaction between ATP and alpha-D-glucose 1-phosphate (G1P) to produce pyrophosphate and ADP-Glc. In Paraburkholderia phymatum (strain DSM 17167 / CIP 108236 / LMG 21445 / STM815) (Burkholderia phymatum), this protein is Glucose-1-phosphate adenylyltransferase.